The sequence spans 2115 residues: Nuclear mitotic apparatus protein 1 (2115 aa).

The head (Globular) stretch occupies residues 1–212 (MTLHATRGAA…SPMGDILQTP (212 aa)). Ser162 is modified (phosphoserine). Thr163 carries the post-translational modification Phosphothreonine. Residues Ser169 and Ser203 each carry the phosphoserine modification. The residue at position 211 (Thr211) is a Phosphothreonine. Positions 213–1699 (QFQMRRLKKQ…ADQQLRDLGK (1487 aa)) form a coiled coil. Ser271 is subject to Phosphoserine. At Lys379 the chain carries N6-acetyllysine. Phosphoserine is present on residues Ser388 and Ser395. The span at 549–560 (LRHQVEQLSSSL) shows a compositional bias: low complexity. Disordered stretches follow at residues 549–593 (LRHQ…EERE) and 746–766 (LVEQ…GRKG). Positions 561–581 (KQKEQQLKEVAEKQEATRQDH) are enriched in basic and acidic residues. Ser820 is modified (phosphoserine). Lys891 carries the N6-acetyllysine modification. Basic and acidic residues-rich tracts occupy residues 926 to 950 (AGEQ…RQPE) and 996 to 1013 (QEER…TQER). Disordered regions lie at residues 926–958 (AGEQ…QQGR) and 988–1013 (LMES…TQER). Thr1047 is modified (phosphothreonine; by PLK1). Positions 1090–1102 (LKEQLAKKEKEHA) are enriched in basic and acidic residues. Disordered stretches follow at residues 1090-1225 (LKEQ…RKNS) and 1275-1296 (ETAS…EVQS). Low complexity-rich tracts occupy residues 1103-1112 (SGSGAQSEAA) and 1133-1142 (EQQCQKQQEQ). The segment covering 1145–1163 (SLERSLEAERASRAERDSA) has biased composition (basic and acidic residues). Ser1187 carries the phosphoserine modification. Residues 1198–1224 (KVQDHSKAEDEWKAQVARGRQEAERKN) are compositionally biased toward basic and acidic residues. Ser1225 bears the Phosphoserine mark. Basic and acidic residues predominate over residues 1283 to 1296 (AAERSSALREEVQS). Residue Lys1511 is modified to N6-acetyllysine. Ser1601 is subject to Phosphoserine. Residue Lys1699 forms a Glycyl lysine isopeptide (Lys-Gly) (interchain with G-Cter in SUMO2) linkage. The interval 1699–1876 (KFQVATDALK…NSALLSLPGY (178 aa)) is membrane-binding domain 1. The interval 1700-2115 (FQVATDALKS…TPRAKGKAKH (416 aa)) is tail (Globular). Ser1721, Ser1724, and Ser1728 each carry phosphoserine. Residues 1734 to 1761 (PLSITSKLPRTQPDGTSVPGEPASPISQ) form a disordered region. Residues 1735-1748 (LSITSKLPRTQPDG) show a composition bias toward polar residues. The short motif at 1742–1748 (PRTQPDG) is the Tankyrase-binding domain element. Phosphoserine is present on residues Ser1757 and Ser1760. A Glycyl lysine isopeptide (Lys-Gly) (interchain with G-Cter in SUMO1); alternate cross-link involves residue Lys1766. Residue Lys1766 forms a Glycyl lysine isopeptide (Lys-Gly) (interchain with G-Cter in SUMO2); alternate linkage. Ser1769 and Ser1772 each carry phosphoserine; by PLK1. Phosphotyrosine is present on Tyr1774. Thr1776 bears the Phosphothreonine mark. Position 1788 is a phosphoserine (Ser1788). Residues 1788 to 1810 (SSLDSLGDVFLDSGRKTRSARRR) are 4.1-binding domain. Ser1789 carries the post-translational modification Phosphoserine; by PLK1. Residues Ser1792 and Ser1800 each carry the phosphoserine modification. At Thr1804 the chain carries Phosphothreonine. Residue Lys1822 forms a Glycyl lysine isopeptide (Lys-Gly) (interchain with G-Cter in SUMO2) linkage. Disordered stretches follow at residues 1826-1901 (EEPD…GRNS) and 1955-2115 (EMKT…KAKH). Residues Ser1830 and Ser1833 each carry the phosphoserine modification. The segment covering 1830 to 1857 (SANSSFYSTRSAPASQASLRATSSTQSL) has biased composition (polar residues). The residue at position 1834 (Ser1834) is a Phosphoserine; by PLK1. A Phosphotyrosine modification is found at Tyr1836. Position 1840 is a phosphoserine (Ser1840). Position 1844 is a phosphoserine; alternate (Ser1844). O-linked (GlcNAc) serine; alternate glycosylation is present at Ser1844. Ser1862 and Ser1887 each carry phosphoserine. A compositionally biased stretch (polar residues) spans 1879–1891 (TTRSSARRSQAGV). Residues 1882–1985 (SSARRSQAGV…AEGTGITTRQ (104 aa)) form a tubulin-binding domain region. The interval 1892–1926 (SSGAPPGRNSFYMGTCQDEPEQLDDWNRIAELQQR) is GPSM2-binding domain. Residues 1955–1966 (EMKTGDPQETLR) show a composition bias toward basic and acidic residues. A Phosphoserine modification is found at Ser1969. The tract at residues 1981–2060 (ITTRQQRKRV…SILNTPKKLG (80 aa)) is membrane-binding domain 2. The Nuclear localization signal motif lies at 1984 to 1989 (RQQRKR). Phosphoserine is present on Ser1991. At Thr2000 the chain carries Phosphothreonine. Ser2003 is modified (phosphoserine). Thr2015 bears the Phosphothreonine; by CDK1 mark. A compositionally biased stretch (basic and acidic residues) spans 2015 to 2032 (TPRDRHEGRKQSTTEAQK). Residue Ser2047 is modified to Phosphoserine. Thr2055 carries the phosphothreonine; by CDK1 modification. 2 positions are modified to phosphoserine: Ser2062 and Ser2077. Phosphoserine; by CDK1 is present on Ser2087. The segment covering 2089 to 2108 (RIATTTASAATAAAIGATPR) has biased composition (low complexity). Thr2106 is modified (phosphothreonine; by CDK1).

Homodimer. Also forms multiarm oligomers by association of C-terminal tail domains, oligomers may further assemble to form a hexagonal nuclear lattice-like network. Associates with the dynein-dynactin complex; this association promotes the transport and accumulation of NUMA1 at the mitotic spindle poles that is inhibited by the BRISC complex in a PLK1-dependent manner. Part of a spindle orientation complex at least composed of GNAI1, GPSM2 and NUMA1. Interacts (via C-terminus) with microtubules (MTs); this interaction is direct and promotes both MT bundle formation and stability in a dynein-dynactin complex- and CDK1-independent manner. Interacts with EPB41 and EPB41L2; these interactions are negatively regulated by CDK1 during metaphase and are important for anaphase-specific localization of NUMA1 in symmetrically dividing cells. Interacts (via C-terminus) with GPSM2 (via TPR repeats); this interaction is direct, prevented by competitive binding of INSC, is inhibited in a PLK1-dependent manner, blocks the association of NUMA1 with MTs and inhibits NUMA1-induced MT bundle formation, prevents the association of NUMA1 with SPAG5, induces mitotic spindle pole localization of GPSM2, both metaphase cell cortex localization of NUMA1 and mitotic spindle organization. Does not interact with GPSM2 during anaphase. Interacts (via C-terminus) with the nuclear importin alpha/importin beta receptor; this interaction is inhibited by RanGTP. Interacts (via C-terminus) with KPNB1; this interaction is inhibited by RanGTP and the BRISC complex. Interacts with ABRAXAS2 and the BRISC complex; these interactions regulate mitotic spindle assembly. Interacts (via N-terminal end of the coiled-coil domain) with RAE1; this interaction promotes mitotic spindle formation. Interacts (via C-terminus) with SPAG5 (via C-terminus); this interaction promotes the recruitment of SPAG5 to the MTs at spindle poles in a dynein-dynactin-dependent manner and regulates mitotic spindle organization and proper chromosome alignment during mitosis. Interacts with TNKS; this interaction occurs at the onset of mitosis. Interacts with TNKS2. Interacts with tubulin. Interacts with KHDC3L (via C-terminus). In terms of processing, phosphorylation and dephosphorylation on Thr-2055 regulates the extent of cortical NUMA1 and the dynein-dynactin complex localization during mitotic metaphase and anaphase. In metaphase, phosphorylation on Thr-2055 occurs in a kinase CDK1-dependent manner; this phosphorylation maintains low levels of cortical dynein-dynactin complex at metaphase, and hence proper spindle positioning. In anaphase, dephosphorylated on Thr-2055 by phosphatase PPP2CA; this dephosphorylation stimulates its membrane association and with the dynein-dynactin complex its enrichment at the cell cortex, and hence robust spindle elongation. Probably also phosphorylated on Thr-2015 and Ser-2087 by CDK1; these phosphorylations may regulate its cell cortex recruitment during metaphase and anaphase. Phosphorylated on Thr-1047, Ser-1769, Ser-1772, Ser-1789 and Ser-1834 by PLK1; these phosphorylations induce cortical dynein-dynactin complex dissociation from the NUMA1-GPSM2 complex and negatively regulates cortical dynein-dynactin complex localization. ADP-ribosylated by TNKS at the onset of mitosis; ADP-ribosylation is not required for its localization to spindle poles. Post-translationally, O-glycosylated during cytokinesis at sites identical or close to phosphorylation sites, this interferes with the phosphorylation status. In terms of processing, ubiquitinated with 'Lys-63'-linked polyubiquitin chains. Deubiquitination by the BRISC complex is important for the incorporation of NUMA1 into mitotic spindle poles and normal spindle pole function, probably by modulating interactions between NUMA1, dynein-dynactin complex and importin-beta.

The protein resides in the nucleus. It is found in the nucleoplasm. The protein localises to the nucleus matrix. Its subcellular location is the chromosome. It localises to the cytoplasm. The protein resides in the cytoskeleton. It is found in the microtubule organizing center. The protein localises to the centrosome. Its subcellular location is the spindle pole. It localises to the cell cortex. The protein resides in the cell membrane. It is found in the lateral cell membrane. The protein localises to the cytosol. Functionally, microtubule (MT)-binding protein that plays a role in the formation and maintenance of the spindle poles and the alignement and the segregation of chromosomes during mitotic cell division. Functions to tether the minus ends of MTs at the spindle poles, which is critical for the establishment and maintenance of the spindle poles. Plays a role in the establishment of the mitotic spindle orientation during metaphase and elongation during anaphase in a dynein-dynactin-dependent manner. In metaphase, part of a ternary complex composed of GPSM2 and G(i) alpha proteins, that regulates the recruitment and anchorage of the dynein-dynactin complex in the mitotic cell cortex regions situated above the two spindle poles, and hence regulates the correct oritentation of the mitotic spindle. During anaphase, mediates the recruitment and accumulation of the dynein-dynactin complex at the cell membrane of the polar cortical region through direct association with phosphatidylinositol 4,5-bisphosphate (PI(4,5)P2), and hence participates in the regulation of the spindle elongation and chromosome segregation. Also binds to other polyanionic phosphoinositides, such as phosphatidylinositol 3-phosphate (PIP), lysophosphatidic acid (LPA) and phosphatidylinositol triphosphate (PIP3), in vitro. Also required for proper orientation of the mitotic spindle during asymmetric cell divisions. Plays a role in mitotic MT aster assembly. Involved in anastral spindle assembly. Positively regulates TNKS protein localization to spindle poles in mitosis. Highly abundant component of the nuclear matrix where it may serve a non-mitotic structural role, occupies the majority of the nuclear volume. Required for epidermal differentiation and hair follicle morphogenesis. In Homo sapiens (Human), this protein is Nuclear mitotic apparatus protein 1.